Consider the following 167-residue polypeptide: Large ribosomal subunit protein uL10 (167 aa).

The protein belongs to the universal ribosomal protein uL10 family. In terms of assembly, part of the ribosomal stalk of the 50S ribosomal subunit. The N-terminus interacts with L11 and the large rRNA to form the base of the stalk. The C-terminus forms an elongated spine to which L12 dimers bind in a sequential fashion forming a multimeric L10(L12)X complex.

Its function is as follows. Forms part of the ribosomal stalk, playing a central role in the interaction of the ribosome with GTP-bound translation factors. The protein is Large ribosomal subunit protein uL10 of Streptococcus mutans serotype c (strain ATCC 700610 / UA159).